A 643-amino-acid chain; its full sequence is Transmembrane 9 superfamily member 4 (643 aa).

A signal peptide spans 1-23 (MAAAMIWWPRFLLLLCLTCKGST). The Extracellular segment spans residues 24-282 (FYVPGVAPIN…TMSDVQIHWF (259 aa)). A helical transmembrane segment spans residues 283–303 (SIINSVVVVFFLSGILSMIII). The Cytoplasmic portion of the chain corresponds to 304-347 (RTLRKDIANYNKEDDIEDTMEESGWKLVHGDVFRPPQYPMILSS). Residue Tyr313 is modified to Phosphotyrosine. The chain crosses the membrane as a helical span at residues 348–368 (LLGSGIQLFCMILIVIFVAML). Topologically, residues 369-377 (GMLSPSSRG) are extracellular. A helical transmembrane segment spans residues 378-398 (ALMTTACFLFMFMGVFGGFSA). Topologically, residues 399–417 (GRLYRTLKGHRWKKGAFCT) are cytoplasmic. A helical transmembrane segment spans residues 418–438 (ATLYPGVVFGICFVLNCFIWG). The Extracellular portion of the chain corresponds to 439-450 (KHSSGAVPFPTM). Residues 451–471 (VALLCMWFGISLPLVYLGYYF) form a helical membrane-spanning segment. Over 472-502 (GFRKQPYDNPVRTNQIPRQIPEQRWYMNRFV) the chain is Cytoplasmic. The helical transmembrane segment at 503-523 (GILMAGILPFGAMFIELFFIF) threads the bilayer. The Extracellular segment spans residues 524–536 (SAIWENQFYYLFG). Residues 537–557 (FLFLVFIILVVSCSQISIVMV) traverse the membrane as a helical segment. At 558–571 (YFQLCAEDYRWWWR) the chain is on the cytoplasmic side. Residues 572-592 (NFLVSGGSAFYVLVYAIFYFV) traverse the membrane as a helical segment. The Extracellular segment spans residues 593–599 (NKLDIVE). Residues 600–620 (FIPSLLYFGYTTLMVLSFWLL) form a helical membrane-spanning segment. The Cytoplasmic portion of the chain corresponds to 621–643 (TGTIGFYAAYMFVRKIYAAVKID).

The protein belongs to the nonaspanin (TM9SF) (TC 9.A.2) family.

The protein localises to the membrane. Its subcellular location is the golgi apparatus. The protein resides in the early endosome. Associates with proteins harboring glycine-rich transmembrane domains and ensures their efficient localization to the cell surface. This is Transmembrane 9 superfamily member 4 (Tm9sf4) from Rattus norvegicus (Rat).